The primary structure comprises 194 residues: E3 ubiquitin-protein ligase RNF185 (194 aa).

The segment covering 1–27 (MASAAASESSSSSSSSSAGAANGQSAG) has biased composition (low complexity). The disordered stretch occupies residues 1 to 32 (MASAAASESSSSSSSSSAGAANGQSAGESGGG). A required for ubiquitin ligase activity and protection against ER stress-induced cell death region spans residues 31–82 (GGGAQDSTFECNICLDTSKDAVISLCGHLFCWPCLHQWLETRPNRQVCPVCK). The RING-type zinc finger occupies 41–82 (CNICLDTSKDAVISLCGHLFCWPCLHQWLETRPNRQVCPVCK). Positions 92 to 126 (PLYGRGSTGQQDPREKTPPRPQGQRPEPENRGGFQ) are disordered. 2 helical membrane-spanning segments follow: residues 133 to 153 (GGFQ…ATAF) and 174 to 194 (QFLS…LLIA).

Its subcellular location is the mitochondrion outer membrane. The protein resides in the endoplasmic reticulum membrane. The enzyme catalyses S-ubiquitinyl-[E2 ubiquitin-conjugating enzyme]-L-cysteine + [acceptor protein]-L-lysine = [E2 ubiquitin-conjugating enzyme]-L-cysteine + N(6)-ubiquitinyl-[acceptor protein]-L-lysine.. It participates in protein modification; protein ubiquitination. Functionally, E3 ubiquitin-protein ligase that regulates selective mitochondrial autophagy by mediating 'Lys-63'-linked polyubiquitination. Acts in the endoplasmic reticulum (ER)-associated degradation (ERAD) pathway, which targets misfolded proteins that accumulate in the endoplasmic reticulum (ER) for ubiquitination and subsequent proteasome-mediated degradation. Protects cells from ER stress-induced apoptosis. Responsible for the cotranslational ubiquitination and degradation of CFTR in the ERAD pathway. Also acts as a regulator of the innate antiviral response by catalyzing 'Lys-27'-linked polyubiquitination of CGAS, thereby promoting CGAS cyclic GMP-AMP synthase activity. Preferentially associates with the E2 enzymes UBE2J1 and UBE2J2. The polypeptide is E3 ubiquitin-protein ligase RNF185 (rnf185) (Danio rerio (Zebrafish)).